Reading from the N-terminus, the 117-residue chain is Eukaryotic translation initiation factor 4E-binding protein 1 (117 aa).

Polar residues-rich tracts occupy residues 1-12 (MSAGSSCSQTPS) and 33-47 (YSTT…TTPG). The disordered stretch occupies residues 1-47 (MSAGSSCSQTPSRAIPTRRVALGDGVQLPPGDYSTTPGGTLFSTTPG). An N-acetylserine modification is found at Ser-2. Phosphothreonine occurs at positions 36 and 40. Ser-43 carries the phosphoserine modification. Thr-45 bears the Phosphothreonine; by MTOR mark. Thr-49 carries the phosphothreonine modification. Phosphotyrosine is present on Tyr-53. Positions 53 to 59 (YDRKFLM) match the YXXXXLphi motif motif. Lys-56 is covalently cross-linked (Glycyl lysine isopeptide (Lys-Gly) (interchain with G-Cter in ubiquitin)). At Ser-64 the chain carries Phosphoserine; by DYRK2, MAPK1, MAPK3 and MTOR. A disordered region spans residues 64–117 (SPVAKTPPKDLPTIPGVTSPTSDEPPMQASQSHLHSSPEDKRAGGEESQFEMDI). Position 69 is a phosphothreonine; by MTOR (Thr-69). Phosphothreonine is present on Thr-76. A compositionally biased stretch (polar residues) spans 79–98 (GVTSPTSDEPPMQASQSHLH). Residues Ser-82, Ser-95, and Ser-99 each carry the phosphoserine modification. Over residues 99–108 (SSPEDKRAGG) the composition is skewed to basic and acidic residues. Ser-100 is modified (phosphoserine; by DYRK2). Phosphoserine is present on Ser-111. Residues 113 to 117 (FEMDI) carry the TOS motif motif.

Belongs to the eIF4E-binding protein family. Hypophosphorylated EIF4EBP1 competes with EIF4G1/EIF4G3 to interact with EIF4E; insulin stimulated MAP-kinase (MAPK1 and MAPK3) or mTORC1 phosphorylation of EIF4EBP1 causes dissociation of the complex allowing EIF4G1/EIF4G3 to bind and consequent initiation of translation. Interacts (via TOS motif) with RPTOR; promoting phosphorylation by mTORC1. Post-translationally, phosphorylated on serine and threonine residues in response to insulin, EGF and PDGF. Phosphorylation at Thr-36, Thr-45, Ser-64 and Thr-69, corresponding to the hyperphosphorylated form, is regulated by mTORC1 and abolishes binding to EIF4E. In terms of processing, ubiquitinated: when eIF4E levels are low, hypophosphorylated form is ubiquitinated by the BCR(KLHL25) complex, leading to its degradation and serving as a homeostatic mechanism to maintain translation and prevent eIF4E inhibition when eIF4E levels are low. Not ubiquitinated when hyperphosphorylated (at Thr-36, Thr-45, Ser-64 and Thr-69) or associated with eIF4E. In terms of tissue distribution, expressed in all tissues examined; highest levels in fat and skeletal tissue, lowest levels in kidney.

The protein localises to the cytoplasm. It is found in the nucleus. Its function is as follows. Repressor of translation initiation that regulates EIF4E activity by preventing its assembly into the eIF4F complex: hypophosphorylated form competes with EIF4G1/EIF4G3 and strongly binds to EIF4E, leading to repress translation. In contrast, hyperphosphorylated form dissociates from EIF4E, allowing interaction between EIF4G1/EIF4G3 and EIF4E, leading to initiation of translation. Mediates the regulation of protein translation by hormones, growth factors and other stimuli that signal through the MAP kinase and mTORC1 pathways. The polypeptide is Eukaryotic translation initiation factor 4E-binding protein 1 (Eif4ebp1) (Rattus norvegicus (Rat)).